The sequence spans 438 residues: DNA primase DnaG (438 aa).

One can recognise a Toprim domain in the interval 169–243 (DSIIVVEGRA…DIDYVARAPY (75 aa)). Residues glutamate 175, aspartate 217, and aspartate 219 each contribute to the Mg(2+) site.

Belongs to the archaeal DnaG primase family. As to quaternary structure, forms a ternary complex with MCM helicase and DNA. The cofactor is Mg(2+).

It catalyses the reaction ssDNA + n NTP = ssDNA/pppN(pN)n-1 hybrid + (n-1) diphosphate.. In terms of biological role, RNA polymerase that catalyzes the synthesis of short RNA molecules used as primers for DNA polymerase during DNA replication. This Methanococcus maripaludis (strain C6 / ATCC BAA-1332) protein is DNA primase DnaG.